The following is a 671-amino-acid chain: Sodium, potassium, lithium and rubidium/H(+) antiporter (671 aa).

11 helical membrane passes run 7–29 (VLVL…FIPV), 46–66 (GLHI…PLLF), 83–103 (PILL…GYTI), 110–130 (IPLP…VVAV), 156–176 (ASGL…AFSI), 182–202 (SFVL…FFII), 228–248 (FVIY…VVAG), 276–296 (IILF…IPDV), 315–335 (ILII…LFWA), 364–384 (GAVT…GSPF), and 389–409 (LIIF…SVLL).

It belongs to the monovalent cation:proton antiporter 1 (CPA1) transporter (TC 2.A.36) family. Nhak (TC 2.A.36.3.2) subfamily.

The protein resides in the cell membrane. Functionally, transporter involved in the efflux of sodium, potassium, lithium and rubidium. The polypeptide is Sodium, potassium, lithium and rubidium/H(+) antiporter (nhaK) (Bacillus pumilus (strain SAFR-032)).